A 438-amino-acid polypeptide reads, in one-letter code: Serine/threonine exchanger SteT (438 aa).

The Cytoplasmic segment spans residues 1 to 11; it reads MHTEDNGLKKE. Residues 12–32 form a helical membrane-spanning segment; that stretch reads IGLLFALTLVIGTIIGSGVFM. Residues 33 to 45 lie on the Extracellular side of the membrane; it reads KPGAVLAYSGDSK. Residues 46–66 traverse the membrane as a helical segment; that stretch reads MALFAWLLGGILTLAGGLTIA. Residues 67–98 lie on the Cytoplasmic side of the membrane; the sequence is EIGTQIPKTGGLYTYLEEVYGEFWGFLCGWVQ. A helical membrane pass occupies residues 99–119; that stretch reads IIIYGPAIIGALGLYFGSLMA. The Extracellular portion of the chain corresponds to 120–126; it reads NLFGWGS. Residues 127-147 form a helical membrane-spanning segment; the sequence is GLSKVIGIIAVLFLCVINIIG. Over 148–151 the chain is Cytoplasmic; it reads TKYG. Residues 152 to 172 traverse the membrane as a helical segment; sequence GFVQTLTTIGKLIPIACIIVF. Residues 173–193 lie on the Extracellular side of the membrane; that stretch reads GLWKGDQHIFTAVNESISDMN. The helical transmembrane segment at 194–214 threads the bilayer; the sequence is FGAAILATLFAYDGWILLAAL. At 215 to 230 the chain is on the cytoplasmic side; it reads GGEMKNPEKLLPRAMT. A helical transmembrane segment spans residues 231 to 251; that stretch reads GGLLIVTAIYIFINFALLHIL. Residues 252–269 lie on the Extracellular side of the membrane; the sequence is SANEIVTLGENATSTAAT. The chain crosses the membrane as a helical span at residues 270–290; the sequence is MLFGSIGGKLISVGIIVSIFG. Over 291–327 the chain is Cytoplasmic; it reads CLNGKVLSFPRVSFAMAERKQLPFAEKLSHVHPSFRT. Residues 328–348 form a helical membrane-spanning segment; sequence PWIAISFQIALALIMMLISNP. Residues 349-352 are Extracellular-facing; that stretch reads DKLS. A helical membrane pass occupies residues 353-373; the sequence is EISIFMIYIFYVMAFFAVFIL. The Cytoplasmic portion of the chain corresponds to 374-388; it reads RKRAKGEKRAYSVPL. Residues 389 to 409 traverse the membrane as a helical segment; the sequence is YPFMPILAIAGSFFVLGSTLI. At 410-411 the chain is on the extracellular side; it reads TD. A helical transmembrane segment spans residues 412–432; the sequence is TMSCGLSILIGLAGLPVYYGM. The Cytoplasmic portion of the chain corresponds to 433 to 438; sequence KKRKAS.

It belongs to the amino acid-polyamine-organocation (APC) superfamily. L-type amino acid transporter (LAT) (TC 2.A.3.8) family. As to quaternary structure, monomer.

The protein localises to the cell membrane. Exhibits an obligate exchange activity for serine, threonine and aromatic amino acids. This Bacillus subtilis (strain 168) protein is Serine/threonine exchanger SteT (steT).